A 167-amino-acid chain; its full sequence is Type IV major pilin protein PilE (167 aa).

The propeptide at 1-7 (MNTLQKG) is leader sequence. N-methylphenylalanine is present on Phe-8. The helical transmembrane segment at 8 to 28 (FTLIELMIVIAIVGILAAVAL) threads the bilayer. O-linked (GlcNAc...) serine glycosylation occurs at Ser-70. Residues Cys-127 and Cys-160 are joined by a disulfide bond.

Belongs to the N-Me-Phe pilin family. As to quaternary structure, the pili are polar flexible filaments of about 5.4 nanometers diameter and 2.5 micrometers average length; they consist of only a single polypeptide chain arranged in a helical configuration of five subunits per turn in the assembled pilus.

The protein localises to the fimbrium. It is found in the membrane. Its function is as follows. Major component of the type IV pilus (T4P) that plays a role in cellular adherence, microcolony formation, resistance to neutrophil mediated killing, twitching motility as well as transformation. Mediates the attachment and the formation of bacterial microcolonies on host epithelial cells. Mechanistically, pili retractation induces host NF-kappa-B activation in infected cells, which is temporally associated with the formation of gonococcal microcolonies. The sequence is that of Type IV major pilin protein PilE (pilE) from Neisseria gonorrhoeae.